The following is a 248-amino-acid chain: Anamorsin homolog (248 aa).

An N-terminal SAM-like domain region spans residues 4-129 (FKGLQKSLYI…ETGSSARLSF (126 aa)). Residues 130–161 (AKKNASAVNVWKISGDDEELIDEEELLDEEDK) are linker. 4 residues coordinate [2Fe-2S] cluster: cysteine 172, cysteine 181, cysteine 184, and cysteine 186. The tract at residues 172 to 186 (CSTTGKRKACKNCSC) is fe-S binding site A. Cysteine 209, cysteine 212, cysteine 220, and cysteine 223 together coordinate [4Fe-4S] cluster. Short sequence motifs (cx2C motif) lie at residues 209–212 (CGNC) and 220–223 (CSTC). The fe-S binding site B stretch occupies residues 209–223 (CGNCYLGDAFRCSTC).

It belongs to the anamorsin family. As to quaternary structure, monomer. [2Fe-2S] cluster is required as a cofactor. It depends on [4Fe-4S] cluster as a cofactor.

It is found in the cytoplasm. The protein localises to the mitochondrion intermembrane space. Functionally, component of the cytosolic iron-sulfur (Fe-S) protein assembly (CIA) machinery. Required for the maturation of extramitochondrial Fe-S proteins. Part of an electron transfer chain functioning in an early step of cytosolic Fe-S biogenesis, facilitating the de novo assembly of a [4Fe-4S] cluster on the cytosolic Fe-S scaffold complex. Electrons are transferred from NADPH via a FAD- and FMN-containing diflavin oxidoreductase. Together with the diflavin oxidoreductase, also required for the assembly of the diferric tyrosyl radical cofactor of ribonucleotide reductase (RNR), probably by providing electrons for reduction during radical cofactor maturation in the catalytic small subunit. This Drosophila melanogaster (Fruit fly) protein is Anamorsin homolog.